We begin with the raw amino-acid sequence, 526 residues long: Putative ankyrin repeat protein R840 (526 aa).

ANK repeat units lie at residues 78 to 107 (TLNECLFISCKRGRNDFVKYFVSKGANIRS), 108 to 137 (RDNFAIKLACEHGHIEVVKYLIDNGVDIRS), 139 to 167 (KNYAVRIACNNGHIDIVKLLISKGANIRD), 169 to 197 (DNCAIKWASENGHIEIVKILVSQGYDSTS), 198 to 227 (NFNEPVILAVKNGHLEVVKYLVSQSDRCRN), 229 to 255 (SAIISAAENGHIEIVKFLASRGSNIRI), 256 to 285 (DDDYTIRIASGNGHLEVVKFLVSKGCNIRS), 286 to 315 (EIDHAVQWASTNGHLEVVEYLVSQGADIKS), 317 to 345 (YDRSVRCASQNGHIEVVKYLVSQGANIRN), 346 to 375 (INDYAVRYASENGHIEVVEYLVSQGANIRV), 376 to 405 (DNDSPLLRACLKGHIKVVKFLVSSGADIRV), 406 to 435 (NNYQPLLIAAGNGHLEILKYLVSQGVNVSI), 437 to 467 (NVPLVGIACIDGYGYFEIVKYLVSIGADINL), 468 to 497 (ADDMAIRLASEYGHLDIVKYLVENGANVRA), and 499 to 526 (NDYAIKQAHRKGHQEVVNYLLSKGAILS).

The polypeptide is Putative ankyrin repeat protein R840 (Acanthamoeba polyphaga (Amoeba)).